Reading from the N-terminus, the 543-residue chain is uncharacterized protein (543 aa).

6 helical membrane passes run 47–67 (FSLLAVFGQSFGSMGLCPSLV), 79–99 (GGMVWSWFVGATCLLPIAFAL), 126–146 (AFLSWFLGYVLALAYSTGFAS), 176–196 (IYVALSFACSALIVLPTKFLA), 198–218 (FSSFNVVFQICTILIFIISLA), and 249–269 (FILCFTTPVWVLSGFESCATI). A glycan (N-linked (GlcNAc...) asparagine) is linked at Asn275. 3 helical membrane-spanning segments follow: residues 282-302 (IAIISSLTVSLFMGFCIMITI), 335-355 (AVGVSAVLIIALCFNCSALCL), and 384-404 (IPLNAILLVNLYTIIVGLLML). Asn406 is a glycosylation site (N-linked (GlcNAc...) asparagine). 3 helical membrane passes run 410–430 (ISSIFNLAIIAFFISYSLPLV), 452–472 (ISIVAVAWLWFMALMLLFPSY), and 480–500 (MNWAIVVLGFTVFFCVGYYYL). An N-linked (GlcNAc...) asparagine glycan is attached at Asn519.

This sequence belongs to the amino acid-polyamine-organocation (APC) superfamily.

It is found in the membrane. This is an uncharacterized protein from Schizosaccharomyces pombe (strain 972 / ATCC 24843) (Fission yeast).